Consider the following 471-residue polypeptide: Pneumolysin (471 aa).

The next 4 membrane-spanning stretches (beta stranded) occupy residues 158–171 (MEQL…DFEK), 178–187 (IDFNSVHSGE), 256–265 (SDEVEAAFEA), and 273–285 (APQT…LDNT). A Conserved undecapeptide motif is present at residues 427–437 (ECTGLAWEWWR). Residues 459-460 (TL) carry the Cholesterol binding motif.

Belongs to the cholesterol-dependent cytolysin family. In terms of assembly, homooligomeric pore complex of 35 to 50 subunits; when inserted in the host membrane. Post-translationally, has a slightly altered apparent molecular weight in a secA2 deletion mutant, but no post-translational modifications have been found.

The protein resides in the secreted. It localises to the cell wall. Its subcellular location is the host cell membrane. Functionally, a cholesterol-dependent toxin that causes cytolysis by forming pores in cholesterol containing host membranes. After binding to target membranes, the protein undergoes a major conformation change, leading to its insertion in the host membrane and formation of an oligomeric pore complex. Cholesterol is required for binding to host membranes, membrane insertion and pore formation; cholesterol binding is mediated by a Thr-Leu pair in the C-terminus. Can be reversibly inactivated by oxidation. In Streptococcus pneumoniae serotype 4 (strain ATCC BAA-334 / TIGR4), this protein is Pneumolysin (ply).